An 89-amino-acid chain; its full sequence is UPF0367 protein PMM0124 (89 aa).

It belongs to the UPF0367 family.

In Prochlorococcus marinus subsp. pastoris (strain CCMP1986 / NIES-2087 / MED4), this protein is UPF0367 protein PMM0124.